A 279-amino-acid chain; its full sequence is Presqualene diphosphate synthase (279 aa).

The protein belongs to the phytoene/squalene synthase family. HpnD subfamily.

The enzyme catalyses 2 (2E,6E)-farnesyl diphosphate = presqualene diphosphate + diphosphate. Its pathway is secondary metabolite biosynthesis; hopanoid biosynthesis. Involved in the biosynthesis of the hopanoid precursor squalene (SQ) from farnesyl diphosphate (FPP). Catalyzes the first step, the formation of presqualene diphosphate (PSPP) from two molecules of FPP. The protein is Presqualene diphosphate synthase of Sinorhizobium fredii (strain NBRC 101917 / NGR234).